The primary structure comprises 262 residues: 4-hydroxy-2-oxo-heptane-1,7-dioate aldolase (262 aa).

The active-site Proton acceptor is His45. Gln147 contributes to the substrate binding site. An a divalent metal cation-binding site is contributed by Glu149. Residues Ala174 and Asp175 each coordinate substrate. Asp175 contacts a divalent metal cation.

The protein belongs to the HpcH/HpaI aldolase family. Homohexamer; trimer of dimers. A divalent metal cation is required as a cofactor.

The enzyme catalyses 4-hydroxy-2-oxoheptanedioate = succinate semialdehyde + pyruvate. It functions in the pathway aromatic compound metabolism; 4-hydroxyphenylacetate degradation; pyruvate and succinate semialdehyde from 4-hydroxyphenylacetate: step 7/7. In terms of biological role, catalyzes the reversible retro-aldol cleavage of 4-hydroxy-2-ketoheptane-1,7-dioate (HKHD) to pyruvate and succinic semialdehyde. This is 4-hydroxy-2-oxo-heptane-1,7-dioate aldolase from Shigella boydii serotype 18 (strain CDC 3083-94 / BS512).